Reading from the N-terminus, the 302-residue chain is Nucleotide-binding protein Bcep1808_2900 (302 aa).

Residue 8-15 participates in ATP binding; that stretch reads GISGSGKS. 57 to 60 lines the GTP pocket; it reads DARS.

It belongs to the RapZ-like family.

In terms of biological role, displays ATPase and GTPase activities. The polypeptide is Nucleotide-binding protein Bcep1808_2900 (Burkholderia vietnamiensis (strain G4 / LMG 22486) (Burkholderia cepacia (strain R1808))).